A 339-amino-acid polypeptide reads, in one-letter code: Deubiquitinase and deneddylase Dub2 (339 aa).

The helical transmembrane segment at I36–F56 threads the bilayer. Active-site residues include H203, D220, and C282.

Belongs to the peptidase C48 family.

It is found in the secreted. The protein localises to the host cell. The protein resides in the membrane. Functionally, effector proteins function to alter host cell physiology and promote bacterial survival in host tissues. This protease possesses deubiquitinating and deneddylating activities. In Chlamydia trachomatis serovar B (strain Jali20/OT), this protein is Deubiquitinase and deneddylase Dub2 (cdu2).